The chain runs to 1868 residues: Proteasome component ECM29 (1868 aa).

Position 2 is an N-acetylserine (Ser2). HEAT repeat units follow at residues 32–69, 116–153, 256–292, 313–351, 384–422, 439–476, 590–627, 707–745, 748–780, 781–818, 846–885, 945–982, 988–1025, 1030–1067, 1137–1174, 1178–1215, 1272–1311, 1361–1398, 1422–1459, 1503–1540, 1544–1581, and 1649–1687; these read TNLQ…RINT, QDRQ…EWVA, PRMI…PYEN, PVKA…HSSE, DFST…LQRQ, VSDL…HLSI, PPFR…QCLI, SVLL…LSDN, AVCA…QTMA, ETYV…THLS, QERK…DLEN, TNVT…YLGH, SKCN…IGGS, SMVK…LFEP, QTAK…ESSL, LYFN…SQPQ, EILD…HSPG, VTNS…KSVG, PYSG…VSAL, NVAS…SGAG, LYLP…GIND, and KYVK…LLGS. Residue Ser1692 is modified to Phosphoserine. HEAT repeat units lie at residues 1746–1785 and 1830–1867; these read RYPM…GISI and GLII…KNIG.

This sequence belongs to the ECM29 family. Component of the proteasome. ECM29 binds to both proteasome 19S and 20S particles.

It is found in the cytoplasm. It localises to the nucleus. Stabilizes the proteasome holoenzyme, probably by tethering the 20S proteolytic core particle and the 19S regulatory particle. The proteasome is a multicatalytic proteinase complex which is characterized by its ability to cleave peptides with Arg, Phe, Tyr, Leu, and Glu adjacent to the leaving group at neutral or slightly basic pH. The proteasome has an ATP-dependent proteolytic activity. In Saccharomyces cerevisiae (strain ATCC 204508 / S288c) (Baker's yeast), this protein is Proteasome component ECM29 (ECM29).